Consider the following 285-residue polypeptide: MSAIIIDGIKIAKKIELNLLKKIEEREKNKKRIPGLAVILIGKNPASEIYVKRKISVCKKVGFISKYWSFPINVDEKDILNLIEKLNNNINIDGILVQLPIPKQINYYKIFSSIRPDKDVDGFHPYNTGSLCQRNPTLRACTPKGIITMLNYTKIKTHGLNAVMVGASNIVGRPMSMELLLAGCTTTVTHRFTKNLRHHIKNADLLVVAIGKPNFLHGDWIKEGAIVIDVGINKLKDGSIVGDVDFKSASLKAAYITPVPGGVGPITVITLLENTLEACEKYHEF.

NADP(+) contacts are provided by residues 166-168 (GAS) and isoleucine 232.

This sequence belongs to the tetrahydrofolate dehydrogenase/cyclohydrolase family. In terms of assembly, homodimer.

The enzyme catalyses (6R)-5,10-methylene-5,6,7,8-tetrahydrofolate + NADP(+) = (6R)-5,10-methenyltetrahydrofolate + NADPH. The catalysed reaction is (6R)-5,10-methenyltetrahydrofolate + H2O = (6R)-10-formyltetrahydrofolate + H(+). The protein operates within one-carbon metabolism; tetrahydrofolate interconversion. Its function is as follows. Catalyzes the oxidation of 5,10-methylenetetrahydrofolate to 5,10-methenyltetrahydrofolate and then the hydrolysis of 5,10-methenyltetrahydrofolate to 10-formyltetrahydrofolate. The sequence is that of Bifunctional protein FolD from Buchnera aphidicola subsp. Schizaphis graminum (strain Sg).